A 396-amino-acid polypeptide reads, in one-letter code: Lipid-A-disaccharide synthase (396 aa).

Belongs to the LpxB family.

The enzyme catalyses a lipid X + a UDP-2-N,3-O-bis[(3R)-3-hydroxyacyl]-alpha-D-glucosamine = a lipid A disaccharide + UDP + H(+). It functions in the pathway bacterial outer membrane biogenesis; LPS lipid A biosynthesis. In terms of biological role, condensation of UDP-2,3-diacylglucosamine and 2,3-diacylglucosamine-1-phosphate to form lipid A disaccharide, a precursor of lipid A, a phosphorylated glycolipid that anchors the lipopolysaccharide to the outer membrane of the cell. The chain is Lipid-A-disaccharide synthase from Acinetobacter baylyi (strain ATCC 33305 / BD413 / ADP1).